Consider the following 399-residue polypeptide: DNA replication and repair protein RecF (399 aa).

30 to 37 is a binding site for ATP; it reads GSNGIGKT.

The protein belongs to the RecF family.

It localises to the cytoplasm. Its function is as follows. The RecF protein is involved in DNA metabolism; it is required for DNA replication and normal SOS inducibility. RecF binds preferentially to single-stranded, linear DNA. It also seems to bind ATP. This chain is DNA replication and repair protein RecF, found in Paenarthrobacter aurescens (strain TC1).